A 556-amino-acid chain; its full sequence is Solute carrier family 22 member 1 (556 aa).

At 1–21 (MPTVDDVLEQVGEFGWFQKQA) the chain is on the cytoplasmic side. A helical transmembrane segment spans residues 22 to 42 (FLLLCLISASLAPIYVGIVFL). The Extracellular segment spans residues 43 to 150 (GFTPGHYCQN…LVCGDAWKVD (108 aa)). A glycan (N-linked (GlcNAc...) asparagine) is linked at asparagine 71. Residues 151–171 (LFQSCVNLGFFLGSLVVGYIA) form a helical membrane-spanning segment. Topologically, residues 172 to 177 (DRFGRK) are cytoplasmic. Residues 178 to 198 (LCLLVTTLVTSVSGVLTAVAP) traverse the membrane as a helical segment. At 199–211 (DYTSMLLFRLLQG) the chain is on the extracellular side. The chain crosses the membrane as a helical span at residues 212–231 (MVSKGSWVSGYTLITEFVGS). The Cytoplasmic portion of the chain corresponds to 232-238 (GYRRTTA). A helical transmembrane segment spans residues 239–259 (ILYQMAFTVGLVGLAGVAYAI). The Extracellular portion of the chain corresponds to 260–263 (PDWR). A helical transmembrane segment spans residues 264-284 (WLQLAVSLPTFLFLLYYWFVP). A Proline-rich sequence motif is present at residues 284–288 (PESPR). Topologically, residues 285–348 (ESPRWLLSQK…FRTPNLRKHT (64 aa)) are cytoplasmic. Residue serine 334 is modified to Phosphoserine. The helical transmembrane segment at 349 to 369 (VILMYLWFSCAVLYQGLIMHV) threads the bilayer. Topologically, residues 370 to 377 (GATGANLY) are extracellular. Residues 378-398 (LDFFYSSLVEFPAAFIILVTI) traverse the membrane as a helical segment. The Cytoplasmic portion of the chain corresponds to 399–403 (DRIGR). A helical membrane pass occupies residues 404-424 (IYPIAASNLVTGAACLLMIFI). The Extracellular segment spans residues 425–429 (PHELH). The helical transmembrane segment at 430-452 (WLNVTLACLGRMGATIVLQMVCL) threads the bilayer. Residues 453–465 (VNAELYPTFIRNL) are Cytoplasmic-facing. Residues 466–486 (GMMVCSALCDLGGIFTPFMVF) traverse the membrane as a helical segment. The Extracellular portion of the chain corresponds to 487–493 (RLMEVWQ). A helical membrane pass occupies residues 494-514 (ALPLILFGVLGLTAGAMTLLL). Over 515–556 (PETKGVALPETIEEAENLGRRKSKAKENTIYLQVQTGKSSST) the chain is Cytoplasmic. Threonine 543 is subject to Phosphothreonine.

It belongs to the major facilitator (TC 2.A.1) superfamily. Organic cation transporter (TC 2.A.1.19) family. Post-translationally, phosphorylated. Expressed in kidney cortex in S1, S2 segments of renal proximal tubules as well as in kidney medulla. Expressed throughout the liver lobuli, in hepatocytes surrounding the central veins. Expressed in enterocytes of villi and crypts in small intestine. Expressed in brain, in some white matter regions like the corpus callosum and in the granular layer of the cerebellum. Expressed in Sertoli cells in testis. Expressed in colon. Expressed in tracheal and bronchial ciliated epithelium in the respiratory tract. Expressed in spleen, moderately in skin, and weakly in the gastrointestinal tract, lung, thymus, muscle, and prostate. In terms of tissue distribution, expressed in kidney cortex and medulla. Expressed in intestine, liver and colon.

It is found in the basolateral cell membrane. Its subcellular location is the apical cell membrane. The protein resides in the lateral cell membrane. The protein localises to the basal cell membrane. It localises to the cell membrane. It catalyses the reaction 1-methylnicotinamide(out) = 1-methylnicotinamide(in). It carries out the reaction dopamine(out) = dopamine(in). The enzyme catalyses serotonin(out) = serotonin(in). The catalysed reaction is (R)-adrenaline(out) = (R)-adrenaline(in). It catalyses the reaction (R)-noradrenaline(out) = (R)-noradrenaline(in). It carries out the reaction histamine(out) = histamine(in). The enzyme catalyses guanidine(out) = guanidine(in). The catalysed reaction is choline(out) = choline(in). It catalyses the reaction acetylcholine(in) = acetylcholine(out). It carries out the reaction thiamine(in) = thiamine(out). The enzyme catalyses agmatine(out) = agmatine(in). The catalysed reaction is putrescine(out) = putrescine(in). It catalyses the reaction spermidine(in) = spermidine(out). It carries out the reaction (R)-carnitine(in) = (R)-carnitine(out). The enzyme catalyses O-isobutanoyl-(R)-carnitine(in) = O-isobutanoyl-(R)-carnitine(out). The catalysed reaction is O-acetyl-(R)-carnitine(in) = O-acetyl-(R)-carnitine(out). It catalyses the reaction O-3-hydroxybutanoyl-(R)-carnitine(in) = O-3-hydroxybutanoyl-(R)-carnitine(out). It carries out the reaction O-propanoyl-(R)-carnitine(in) = O-propanoyl-(R)-carnitine(out). The enzyme catalyses O-butanoyl-(R)-carnitine(in) = O-butanoyl-(R)-carnitine(out). The catalysed reaction is O-2-methylbutanoyl-(R)-carnitine(in) = O-2-methylbutanoyl-(R)-carnitine(out). It catalyses the reaction O-3-methylbutanoyl-(R)-carnitine(in) = O-3-methylbutanoyl-(R)-carnitine(out). It carries out the reaction O-hexanoyl-(R)-carnitine(in) = O-hexanoyl-(R)-carnitine(out). The enzyme catalyses L-histidyl-L-proline diketopiperazine(in) = L-histidyl-L-proline diketopiperazine(out). The catalysed reaction is (R)-salsolinol(in) = (R)-salsolinol(out). It catalyses the reaction prostaglandin F2alpha(out) = prostaglandin F2alpha(in). It carries out the reaction prostaglandin E2(out) = prostaglandin E2(in). Its activity is regulated as follows. Phosphorylation of the transporter leads to changes in its substrate affinity, resulting in a regulation of the transport activity. In contrast with human ortholog, ASP uptake is stimulated by protein kinase A (PKA) and C (PKC) and endogenous tyrosine kinase activation. ASP affinity is induced by PKC-dependent phosphorylation. Inhibited by cGMP, most likely through a cGMP-binding protein that interacts with OCT1. In terms of biological role, electrogenic voltage-dependent transporter that mediates the transport of a variety of organic cations such as endogenous bioactive amines, cationic drugs and xenobiotics. Functions as a pH- and Na(+)-independent, bidirectional transporter. Cation cellular uptake or release is driven by the electrochemical potential (i.e. membrane potential and concentration gradient) and substrate selectivity. Hydrophobicity is a major requirement for recognition in polyvalent substrates and inhibitors. Primarily expressed in the basolateral membrane of hepatocytes and proximal tubules and involved in the uptake and disposition of cationic compounds from the blood by hepatic and renal clearance. Most likely functions as an uptake carrier in enterocytes contributing to the intestinal excretion and elimination of organic cations from the systemic circulation. Transports endogenous monoamines such as N-1-methylnicotinamide (NMN), guanidine, neurotransmitters dopamine, serotonin, noradrenaline, adrenaline and histamine, and quaternary ammonium compound such as choline. Also transports natural polyamines such as spermidine, agmatine and putrescine at low affinity, but relatively high turnover. Involved in the hepatic uptake of vitamin B1/thiamine, hence regulating hepatic lipid and energy metabolism. Contributes to the influx and efflux of fatty acid carriers carnitines and acylcarnitines across the basolateral membrane of hepatocytes, from the liver to the systemic circulation and inversely and may be involved in regulating the systemic availability of hepatic acylcarnitines. Mediates the bidirectional transport of acetylcholine (ACh) at the apical membrane of ciliated cell in airway epithelium, thereby playing a role in luminal release of ACh from bronchial epithelium. Transports dopaminergic neuromodulators cyclo(his-pro) and salsolinol with lower efficency. Also capable of transporting non-amine endogenous compounds such as prostaglandin E2 (PGE2) and prostaglandin F2-alpha (PGF2-alpha). May contribute to the transport of cationic compounds in testis across the blood-testis-barrier. Also mediates the uptake of xenobiotics tributylmethylammonium (TBuMA), quinidine, N-methyl-quinine (NMQ), N-methyl-quinidine (NMQD) N-(4,4-azo-n-pentyl)-quinuclidine (APQ), azidoprocainamide methoiodide (AMP), N-(4,4-azo-n-pentyl)-21-deoxyajmalinium (APDA) and 4-(4-(dimethylamino)styryl)-N-methylpyridinium (ASP). Functionally, functional isoform capable of transporting TEA. This chain is Solute carrier family 22 member 1, found in Rattus norvegicus (Rat).